Reading from the N-terminus, the 427-residue chain is Glutamate-1-semialdehyde 2,1-aminomutase (427 aa).

Lysine 265 is modified (N6-(pyridoxal phosphate)lysine).

The protein belongs to the class-III pyridoxal-phosphate-dependent aminotransferase family. HemL subfamily. As to quaternary structure, homodimer. Requires pyridoxal 5'-phosphate as cofactor.

Its subcellular location is the cytoplasm. The catalysed reaction is (S)-4-amino-5-oxopentanoate = 5-aminolevulinate. Its pathway is porphyrin-containing compound metabolism; protoporphyrin-IX biosynthesis; 5-aminolevulinate from L-glutamyl-tRNA(Glu): step 2/2. The polypeptide is Glutamate-1-semialdehyde 2,1-aminomutase (Pseudomonas syringae pv. syringae (strain B728a)).